The primary structure comprises 492 residues: 2-succinylbenzoate--CoA ligase (492 aa).

The protein belongs to the ATP-dependent AMP-binding enzyme family. MenE subfamily.

It catalyses the reaction 2-succinylbenzoate + ATP + CoA = 2-succinylbenzoyl-CoA + AMP + diphosphate. It functions in the pathway quinol/quinone metabolism; 1,4-dihydroxy-2-naphthoate biosynthesis; 1,4-dihydroxy-2-naphthoate from chorismate: step 5/7. Its pathway is quinol/quinone metabolism; menaquinone biosynthesis. Converts 2-succinylbenzoate (OSB) to 2-succinylbenzoyl-CoA (OSB-CoA). The chain is 2-succinylbenzoate--CoA ligase from Staphylococcus aureus (strain MRSA252).